Here is a 103-residue protein sequence, read N- to C-terminus: Small ribosomal subunit protein uS10 (103 aa).

This sequence belongs to the universal ribosomal protein uS10 family. Part of the 30S ribosomal subunit.

Involved in the binding of tRNA to the ribosomes. This is Small ribosomal subunit protein uS10 from Clostridioides difficile (strain 630) (Peptoclostridium difficile).